We begin with the raw amino-acid sequence, 457 residues long: tRNA modification GTPase MnmE (457 aa).

Residues Arg-23, Glu-85, and Arg-124 each contribute to the (6S)-5-formyl-5,6,7,8-tetrahydrofolate site. The TrmE-type G domain occupies 220 to 376 (GALVVLAGQV…LVTAIRAAVL (157 aa)). Asn-230 provides a ligand contact to K(+). Residues 230-235 (NAGKSS), 249-255 (TDLPGTT), and 274-277 (DTAG) each bind GTP. Ser-234 is a binding site for Mg(2+). Residues Thr-249, Leu-251, and Thr-254 each contribute to the K(+) site. Thr-255 contributes to the Mg(2+) binding site. Lys-457 is a (6S)-5-formyl-5,6,7,8-tetrahydrofolate binding site.

This sequence belongs to the TRAFAC class TrmE-Era-EngA-EngB-Septin-like GTPase superfamily. TrmE GTPase family. In terms of assembly, homodimer. Heterotetramer of two MnmE and two MnmG subunits. It depends on K(+) as a cofactor.

The protein resides in the cytoplasm. Exhibits a very high intrinsic GTPase hydrolysis rate. Involved in the addition of a carboxymethylaminomethyl (cmnm) group at the wobble position (U34) of certain tRNAs, forming tRNA-cmnm(5)s(2)U34. This Nitratidesulfovibrio vulgaris (strain ATCC 29579 / DSM 644 / CCUG 34227 / NCIMB 8303 / VKM B-1760 / Hildenborough) (Desulfovibrio vulgaris) protein is tRNA modification GTPase MnmE.